The chain runs to 147 residues: SsrA-binding protein (147 aa).

This sequence belongs to the SmpB family.

The protein resides in the cytoplasm. In terms of biological role, required for rescue of stalled ribosomes mediated by trans-translation. Binds to transfer-messenger RNA (tmRNA), required for stable association of tmRNA with ribosomes. tmRNA and SmpB together mimic tRNA shape, replacing the anticodon stem-loop with SmpB. tmRNA is encoded by the ssrA gene; the 2 termini fold to resemble tRNA(Ala) and it encodes a 'tag peptide', a short internal open reading frame. During trans-translation Ala-aminoacylated tmRNA acts like a tRNA, entering the A-site of stalled ribosomes, displacing the stalled mRNA. The ribosome then switches to translate the ORF on the tmRNA; the nascent peptide is terminated with the 'tag peptide' encoded by the tmRNA and targeted for degradation. The ribosome is freed to recommence translation, which seems to be the essential function of trans-translation. The chain is SsrA-binding protein from Thermosipho melanesiensis (strain DSM 12029 / CIP 104789 / BI429).